The sequence spans 231 residues: ATP-dependent dethiobiotin synthetase BioD (231 aa).

Position 12–17 (12–17 (EVGKTV)) interacts with ATP. Thr-16 serves as a coordination point for Mg(2+). Lys-37 is a catalytic residue. Substrate is bound at residue Ser-41. ATP contacts are provided by residues Asp-51, 112-115 (EGAG), and 202-204 (PKL). 2 residues coordinate Mg(2+): Asp-51 and Glu-112.

It belongs to the dethiobiotin synthetase family. Homodimer. Mg(2+) serves as cofactor.

The protein localises to the cytoplasm. It catalyses the reaction (7R,8S)-7,8-diammoniononanoate + CO2 + ATP = (4R,5S)-dethiobiotin + ADP + phosphate + 3 H(+). Its pathway is cofactor biosynthesis; biotin biosynthesis; biotin from 7,8-diaminononanoate: step 1/2. Functionally, catalyzes a mechanistically unusual reaction, the ATP-dependent insertion of CO2 between the N7 and N8 nitrogen atoms of 7,8-diaminopelargonic acid (DAPA, also called 7,8-diammoniononanoate) to form a ureido ring. This is ATP-dependent dethiobiotin synthetase BioD from Bacillus subtilis subsp. natto.